Reading from the N-terminus, the 202-residue chain is IMP cyclohydrolase (202 aa).

This sequence belongs to the archaeal IMP cyclohydrolase family.

The enzyme catalyses IMP + H2O = 5-formamido-1-(5-phospho-D-ribosyl)imidazole-4-carboxamide. It participates in purine metabolism; IMP biosynthesis via de novo pathway; IMP from 5-formamido-1-(5-phospho-D-ribosyl)imidazole-4-carboxamide: step 1/1. Functionally, catalyzes the cyclization of 5-formylamidoimidazole-4-carboxamide ribonucleotide to IMP. This Methanothermobacter thermautotrophicus (strain ATCC 29096 / DSM 1053 / JCM 10044 / NBRC 100330 / Delta H) (Methanobacterium thermoautotrophicum) protein is IMP cyclohydrolase.